Consider the following 348-residue polypeptide: Putative serine/threonine-protein phosphatase C26H8.05c (348 aa).

Mn(2+) is bound by residues Asp-53, His-55, Asp-81, and Asn-113. His-114 (proton donor) is an active-site residue. The Mn(2+) site is built by His-163 and His-237. A disordered region spans residues 259–282 (TNEEDSELDSDSASPVDDSPAPGD). The span at 269 to 280 (DSASPVDDSPAP) shows a compositional bias: low complexity. The residue at position 272 (Ser-272) is a Phosphoserine. Residue Leu-348 is modified to Leucine methyl ester.

This sequence belongs to the PPP phosphatase family. PP-1 subfamily. Requires Mn(2+) as cofactor.

Its subcellular location is the cytoplasm. It localises to the nucleus. It carries out the reaction O-phospho-L-seryl-[protein] + H2O = L-seryl-[protein] + phosphate. The enzyme catalyses O-phospho-L-threonyl-[protein] + H2O = L-threonyl-[protein] + phosphate. The sequence is that of Putative serine/threonine-protein phosphatase C26H8.05c from Schizosaccharomyces pombe (strain 972 / ATCC 24843) (Fission yeast).